The following is a 247-amino-acid chain: Aliphatic sulfonates import ATP-binding protein SsuB 1 (247 aa).

The region spanning 7-222 (LSLSGVHKSF…KRSSYEFVET (216 aa)) is the ABC transporter domain. 39-46 (GKSGCGKS) contacts ATP.

Belongs to the ABC transporter superfamily. Aliphatic sulfonates importer (TC 3.A.1.17.2) family. As to quaternary structure, the complex is composed of two ATP-binding proteins (SsuB), two transmembrane proteins (SsuC) and a solute-binding protein (SsuA).

The protein localises to the cell membrane. The catalysed reaction is ATP + H2O + aliphatic sulfonate-[sulfonate-binding protein]Side 1 = ADP + phosphate + aliphatic sulfonateSide 2 + [sulfonate-binding protein]Side 1.. Its function is as follows. Part of the ABC transporter complex SsuABC involved in aliphatic sulfonates import. Responsible for energy coupling to the transport system. The sequence is that of Aliphatic sulfonates import ATP-binding protein SsuB 1 from Shouchella clausii (strain KSM-K16) (Alkalihalobacillus clausii).